A 569-amino-acid chain; its full sequence is Urease subunit beta (569 aa).

Residues 131–569 (GGIDTHIHFI…VSLAQLFSIF (439 aa)) enclose the Urease domain. Positions 136, 138, and 219 each coordinate Ni(2+). Lys219 is subject to N6-carboxylysine. Position 221 (His221) interacts with substrate. 2 residues coordinate Ni(2+): His248 and His274. His322 acts as the Proton donor in catalysis. Asp362 contributes to the Ni(2+) binding site.

It belongs to the metallo-dependent hydrolases superfamily. Urease alpha subunit family. Heterohexamer of 3 UreA (alpha) and 3 UreB (beta) subunits. Four heterohexamers assemble to form a 16 nm dodecameric complex. Ni cation serves as cofactor. Post-translationally, carboxylation allows a single lysine to coordinate two nickel ions.

The protein resides in the cytoplasm. The enzyme catalyses urea + 2 H2O + H(+) = hydrogencarbonate + 2 NH4(+). It functions in the pathway nitrogen metabolism; urea degradation; CO(2) and NH(3) from urea (urease route): step 1/1. Functionally, ammonia produced by ureolysis increases the gastric pH thereby providing an environment permissive for colonization of the stomach. This Helicobacter pylori (strain J99 / ATCC 700824) (Campylobacter pylori J99) protein is Urease subunit beta.